The sequence spans 333 residues: Cytosolic sulfotransferase 10 (333 aa).

76-81 (KSGTTW) is a 3'-phosphoadenylyl sulfate binding site. Residue histidine 146 is the Proton acceptor of the active site. Residues arginine 168, serine 176, tyrosine 234, and 299–301 (RKG) each bind 3'-phosphoadenylyl sulfate.

The protein belongs to the sulfotransferase 1 family. In terms of tissue distribution, expressed in roots.

The protein resides in the cytoplasm. Functionally, sulfotransferase that utilizes 3'-phospho-5'-adenylyl sulfate (PAPS) as sulfonate donor to specifically catalyze the sulfate conjugation of brassinosteroids, including castasterone (CS), brassinolide (BL), related 24-epimers, and the naturally occurring (22R, 23R)-28-homobrassinosteroids. No activity on phenolic acids, desulfo-glucosinolates, flavonoids, steroids, gibberellic acids, cytokinins, phenylpropanoids, hydroxyjasmonates and coumarins. This chain is Cytosolic sulfotransferase 10 (SOT10), found in Arabidopsis thaliana (Mouse-ear cress).